The following is a 427-amino-acid chain: Glutamate-1-semialdehyde 2,1-aminomutase (427 aa).

An N6-(pyridoxal phosphate)lysine modification is found at Lys265.

This sequence belongs to the class-III pyridoxal-phosphate-dependent aminotransferase family. HemL subfamily. Homodimer. It depends on pyridoxal 5'-phosphate as a cofactor.

The protein resides in the cytoplasm. The catalysed reaction is (S)-4-amino-5-oxopentanoate = 5-aminolevulinate. It functions in the pathway porphyrin-containing compound metabolism; protoporphyrin-IX biosynthesis; 5-aminolevulinate from L-glutamyl-tRNA(Glu): step 2/2. This chain is Glutamate-1-semialdehyde 2,1-aminomutase, found in Neisseria meningitidis serogroup B (strain ATCC BAA-335 / MC58).